Here is a 224-residue protein sequence, read N- to C-terminus: Jacalin-related lectin 24 (224 aa).

One can recognise a Jacalin-type lectin domain in the interval 8 to 160 (MFKVGPIGSK…LTSIGIYVYP (153 aa)).

The protein belongs to the jacalin lectin family.

This chain is Jacalin-related lectin 24 (JAL24), found in Arabidopsis thaliana (Mouse-ear cress).